Consider the following 1861-residue polypeptide: Protein TANC1 (1861 aa).

Methionine 1 is modified (N-acetylmethionine). Disordered stretches follow at residues 1–46 (MLKA…SSLP), 63–99 (SLPSSPLLPRQSHLVQSRVNKKSPGPVRKPKYVESPR), 206–225 (KSPCETISSPSSTLESKDSG), 257–311 (QKGV…MPRP), and 439–486 (QIAS…ISAE). Residues 8-21 (KSREGGKGGKKEAG) show a composition bias toward basic and acidic residues. Serine 63, serine 66, serine 67, serine 207, and serine 270 each carry phosphoserine. Residues 206 to 219 (KSPCETISSPSSTL) are compositionally biased toward polar residues. The segment covering 440-455 (IASNSPGSSPKTSDPT) has biased composition (polar residues). Residues 461 to 480 (TPLLSPSSSTSASSTAKTPL) show a composition bias toward low complexity. A Phosphoserine modification is found at serine 465. ANK repeat units lie at residues 896–928 (EGLSAALASLRNLYTPNVKVSRLLILGGANVNY), 934–963 (NNAPILCVQSHLGHEEVVTLLLEFGACLDG), 967–996 (NGMTALCYAAAAGHMKLVCLLTKKGVRVDH), 1000–1029 (KGQCALVHSALRGHGDILQYLLTCEWSPGP), 1040–1069 (ALQQALTAAASMGHSSVVQCLLGMEKEHEV), 1078–1107 (WGETALTAAAGRGKLEVCELLLGHGAAVSR), 1111–1140 (RGVPPLFCAARQGHWQIVRLLLERGCDVNL), 1144–1173 (QGRTPLMVAACEGHLSTVEFLLSKGAALSS), 1177–1206 (EGLSALSWACLKGHRAVVQYLVEEGAAIDQ), 1210–1239 (NGRTPLDLAAFYGDAETVLYLVEKGAVIEH), and 1243–1272 (SGMRPLDRAIGCRNTSVVVALLRKGAKLGN). TPR repeat units follow at residues 1289 to 1322 (LQKLMEEGNVMYKKGKMKEAAQRYQYALRKFPRE), 1336 to 1369 (VSLYLNLSRCRRKTNDFGMAEEFASKALELKPKS), and 1371 to 1403 (EAFYARARAKRNSRQFVAALADLQEAVKLCPTN). Positions 1421–1431 (QRSQQQKQQGP) are enriched in low complexity. Disordered stretches follow at residues 1421-1485 (QRSQ…SVPS) and 1636-1696 (VAVD…KVQG). Serine 1439 bears the Phosphoserine mark. Low complexity-rich tracts occupy residues 1467-1485 (QEESVSPTPRSQPSSSVPS) and 1659-1689 (SLTSSGSSGSPSSSIKMSSSTSSLTSSSSFS). Phosphoserine is present on residues serine 1668, serine 1676, and serine 1677.

It belongs to the TANC family. Interacts probably directly with DLG1, DLG4, HOMER1. Interacts with DLGAP1, INA, CAMK2A, GRIN2B and GRIA1. Interacts with TNIK. Interacts with MINK1. Phosphorylated; by MINK1 and TNIK upon stimulation by RAP2A.

The protein resides in the postsynaptic density. Functionally, may be a scaffold component in the postsynaptic density. This Homo sapiens (Human) protein is Protein TANC1 (TANC1).